The chain runs to 71 residues: Conotoxin Bu24 (71 aa).

The first 21 residues, 1–21, serve as a signal peptide directing secretion; it reads MGMRMMVTVFLLVVLATTVVS. The propeptide occupies 22-44; that stretch reads LRSNRASDGRRGIVNKLNDLVPK. N70 is subject to Asparagine amide.

It belongs to the conotoxin A superfamily. In terms of processing, contains 3 disulfide bonds. They are not indicated here, since framework IV presents two different connectivities (I-V, II-III, IV-VI and I-III, II-V, IV-VI). In terms of tissue distribution, expressed by the venom duct.

The protein localises to the secreted. The sequence is that of Conotoxin Bu24 from Conus bullatus (Bubble cone).